The primary structure comprises 271 residues: Energy-coupling factor transporter ATP-binding protein EcfA (271 aa).

In terms of domain architecture, ABC transporter spans 2–231 (ISIQNLTFYY…PLFLQQYKLN (230 aa)). ATP is bound at residue 34 to 41 (GHNGSGKS).

It belongs to the ABC transporter superfamily. Energy-coupling factor EcfA family. Forms a stable energy-coupling factor (ECF) transporter complex composed of 2 membrane-embedded substrate-binding proteins (S component), 2 ATP-binding proteins (A component) and 2 transmembrane proteins (T component).

It localises to the cell membrane. Its function is as follows. ATP-binding (A) component of a common energy-coupling factor (ECF) ABC-transporter complex. Unlike classic ABC transporters this ECF transporter provides the energy necessary to transport a number of different substrates. This Onion yellows phytoplasma (strain OY-M) protein is Energy-coupling factor transporter ATP-binding protein EcfA.